A 392-amino-acid polypeptide reads, in one-letter code: MENRIEMSQLRASKKDSKISYVLLMATKLYLESSQPVGSKLLKETYCSDLSSATIRNYFAQLETDGFLRKNHISGGRIPTDLAFRYYVDHNVPFLEQEEILAIQQKLTELPEYSKNIVKDLQKASEVLSDILQLPVCFSSPRFESDSVINIQLVAIDDQRVVFVLSTEFGQVFTDVLWLPEQLPENSLKRIEGFLQNYLRKQPSDGLLSQKEEDLGMVLYNEVVVRYLTRYCHFSEEDLYQTGLSRLLKYGTFKEPETLAQGLAFFENRKHMCQLLNTYLHKETPTAFIGRELADIVGNTDPSCAVITIPYYMDHTPLGAFGVLGPMNLPYQQVFGTLSLFTERLKVILTQSFYKFKLSFRRPCPTDPRCSQRPAELTRSSSIKLLPAKELS.

This sequence belongs to the HrcA family.

In terms of biological role, negative regulator of class I heat shock genes (grpE-dnaK-dnaJ and groELS operons). Prevents heat-shock induction of these operons. This Chlamydia trachomatis serovar A (strain ATCC VR-571B / DSM 19440 / HAR-13) protein is Heat-inducible transcription repressor HrcA.